Consider the following 425-residue polypeptide: Inhibin beta A chain (425 aa).

The signal sequence occupies residues 1–20; it reads MPLLWLRGFLLASCWIIVRS. Residues 21–309 constitute a propeptide that is removed on maturation; the sequence is SPTPGSEGHS…EDHPHRRRRR (289 aa). N165 carries N-linked (GlcNAc...) asparagine glycosylation. The interval 260–289 is disordered; that stretch reads KKRKEEEGEGKKRDGEGGAGGDEEKEQSHR. The segment covering 263–275 has biased composition (basic and acidic residues); the sequence is KEEEGEGKKRDGE. Disulfide bonds link C313-C321, C320-C390, C349-C422, and C353-C424.

Belongs to the TGF-beta family. Dimeric, linked by one or more disulfide bonds. Inhibin A is a dimer of alpha/INHA and beta-A/INHBA. Activin A is a homodimer of beta-A/INHBA. Activin AB is a dimer of beta-A/INHBA and beta-B/INHBB. Interacts with FST and FSTL3; these interactions prevent activin A interaction to its type II receptor. Activin A interacts with ACVR2A. Activin A interacts with BMPR2. Inhibin A interacts with ACVR1; this interaction creates a non-signaling complex (NSC) that inhibits ACVR1-mediated BMP signaling. Inhibin A interacts with ACVR2A.

The protein resides in the secreted. Inhibins/activins are involved in regulating a number of diverse functions such as hypothalamic and pituitary hormone secretion, gonadal hormone secretion, germ cell development and maturation, erythroid differentiation, insulin secretion, nerve cell survival, embryonic axial development or bone growth, depending on their subunit composition. Functionally, activin A is a homodimer of INHBA that plays a role in several essential biological processes including embryonic development, stem cell maintenance and differentiation, haematopoiesis, cell proliferation and tissue fibrosis. Signals through type I (such as ACVR1B or ACVR1C) and type II receptors (such as ACVR2A, ACVR2B or BMPR2) which, upon ligand binding, phosphorylate SMAD2 and SMAD3 intracellular signaling mediators that form a complex with SMAD4, translocate to the nucleus and modulate gene expression. Can also activate alternative non-canonical intracellular signaling pathways including the p38 MAPK, extracellular signal-regulated kinases 1/2 (ERK1/2) and c-Jun N-terminal kinases (JNKs) to modulate cell migration and differentiation. Alternatively, promotes osteoblastic differentiation via ACVRL1-SMAD1/5/9 pathway. In addition, can engage the type I receptor ACVR1 to form an ACVR1-activin A-type II receptor non-signaling complex (NSC) that renders receptors unavailable for engagement with BMPs, hence resulting in an apparent inhibition of ACVR1-mediated BMP signaling. In terms of biological role, inhibin A is a dimer of alpha/INHA and beta-A/INHBA that functions as a feedback regulator in the hypothalamic-pituitary-gonadal (HPG) axis. Inhibits the secretion of FSH from the anterior pituitary gland by acting on pituitary gonadotrope cells. Antagonizes activin A by binding to the proteoglycan, betaglycan, and forming a stable complex with and, thereby, sequestering type II activin receptors while excluding type I receptor. The chain is Inhibin beta A chain (INHBA) from Ovis aries (Sheep).